We begin with the raw amino-acid sequence, 417 residues long: Serine hydroxymethyltransferase (417 aa).

Residues leucine 121 and glycine 125–leucine 127 contribute to the (6S)-5,6,7,8-tetrahydrofolate site. Lysine 229 carries the post-translational modification N6-(pyridoxal phosphate)lysine. Serine 355 to phenylalanine 357 provides a ligand contact to (6S)-5,6,7,8-tetrahydrofolate.

It belongs to the SHMT family. Homodimer. Pyridoxal 5'-phosphate serves as cofactor.

It is found in the cytoplasm. It catalyses the reaction (6R)-5,10-methylene-5,6,7,8-tetrahydrofolate + glycine + H2O = (6S)-5,6,7,8-tetrahydrofolate + L-serine. It participates in one-carbon metabolism; tetrahydrofolate interconversion. It functions in the pathway amino-acid biosynthesis; glycine biosynthesis; glycine from L-serine: step 1/1. Functionally, catalyzes the reversible interconversion of serine and glycine with tetrahydrofolate (THF) serving as the one-carbon carrier. This reaction serves as the major source of one-carbon groups required for the biosynthesis of purines, thymidylate, methionine, and other important biomolecules. Also exhibits THF-independent aldolase activity toward beta-hydroxyamino acids, producing glycine and aldehydes, via a retro-aldol mechanism. This chain is Serine hydroxymethyltransferase, found in Edwardsiella ictaluri (strain 93-146).